A 632-amino-acid chain; its full sequence is FAD-binding monooxygenase ausB (632 aa).

The segment at 1 to 50 (MASAPEVESVKTPDPASTKTQHTSIAEIHTADQTWNNESNTRLPPNHRHH) is disordered. 2 stretches are compositionally biased toward polar residues: residues 15–24 (PASTKTQHTS) and 31–43 (ADQT…NTRL). FAD contacts are provided by residues 116-119 (TWYW), 128-129 (DI), and Tyr134. 126–128 (MCD) is an NADP(+) binding site. Residues 269-275 (TGSTAIQ) and 292-293 (RT) each bind NADP(+).

Belongs to the FAD-binding monooxygenase family. It depends on FAD as a cofactor.

It catalyses the reaction protoaustinoid A + AH2 + O2 = berkeleyone A + A + H2O. The protein operates within secondary metabolite biosynthesis; terpenoid biosynthesis. In terms of biological role, FAD-binding monooxygenase; part of the gene cluster that mediates the biosynthesis of calidodehydroaustin, a fungal meroterpenoid. The first step of the pathway is the synthesis of 3,5-dimethylorsellinic acid by the polyketide synthase ausA. 3,5-dimethylorsellinic acid is then prenylated by the polyprenyl transferase ausN. Further epoxidation by the FAD-dependent monooxygenase ausM and cyclization by the probable terpene cyclase ausL lead to the formation of protoaustinoid A. Protoaustinoid A is then oxidized to spiro-lactone preaustinoid A3 by the combined action of the FAD-binding monooxygenases ausB and ausC, and the dioxygenase ausE. Acid-catalyzed keto-rearrangement and ring contraction of the tetraketide portion of preaustinoid A3 by ausJ lead to the formation of preaustinoid A4. The aldo-keto reductase ausK, with the help of ausH, is involved in the next step by transforming preaustinoid A4 into isoaustinone which is in turn hydroxylated by the P450 monooxygenase ausI to form austinolide. The cytochrome P450 monooxygenase ausG modifies austinolide to austinol. Austinol is further acetylated to austin by the O-acetyltransferase ausP, which spontaneously changes to dehydroaustin. The cytochrome P450 monooxygenase ausR then converts dehydroaustin is into 7-dehydrodehydroaustin. The hydroxylation catalyzed by ausR permits the O-acetyltransferase ausQ to add an additional acetyl group to the molecule, leading to the formation of acetoxydehydroaustin. The short chain dehydrogenase ausT catalyzes the reduction of the double bond present between carbon atoms 1 and 2 to convert 7-dehydrodehydroaustin into 1,2-dihydro-7-hydroxydehydroaustin. AusQ catalyzes not only an acetylation reaction but also the addition of the PKS ausV diketide product to 1,2-dihydro-7-hydroxydehydroaustin, forming precalidodehydroaustin. Finally, the iron/alpha-ketoglutarate-dependent dioxygenase converts precalidodehydroaustin into calidodehydroaustin. In Aspergillus calidoustus, this protein is FAD-binding monooxygenase ausB.